The sequence spans 63 residues: Cytochrome b-c1 complex subunit 9 (63 aa).

The Mitochondrial matrix portion of the chain corresponds to Ala2 to Phe21. Residues Ala22–Ile47 form a helical membrane-spanning segment. At Asn48–Lys63 the chain is on the mitochondrial intermembrane side.

It belongs to the UQCR10/QCR9 family. As to quaternary structure, component of the ubiquinol-cytochrome c oxidoreductase (cytochrome b-c1 complex, complex III, CIII), a multisubunit enzyme composed of 11 subunits. The complex is composed of 3 respiratory subunits cytochrome b, cytochrome c1 and Rieske protein UQCRFS1, 2 core protein subunits UQCRC1/QCR1 and UQCRC2/QCR2, and 6 low-molecular weight protein subunits UQCRH/QCR6, UQCRB/QCR7, UQCRQ/QCR8, UQCR10/QCR9, UQCR11/QCR10 and subunit 9, the cleavage product of Rieske protein UQCRFS1. The complex exists as an obligatory dimer and forms supercomplexes (SCs) in the inner mitochondrial membrane with NADH-ubiquinone oxidoreductase (complex I, CI) and cytochrome c oxidase (complex IV, CIV), resulting in different assemblies (supercomplex SCI(1)III(2)IV(1) and megacomplex MCI(2)III(2)IV(2)). Interacts with STMP1.

It is found in the mitochondrion inner membrane. Functionally, component of the ubiquinol-cytochrome c oxidoreductase, a multisubunit transmembrane complex that is part of the mitochondrial electron transport chain which drives oxidative phosphorylation. The respiratory chain contains 3 multisubunit complexes succinate dehydrogenase (complex II, CII), ubiquinol-cytochrome c oxidoreductase (cytochrome b-c1 complex, complex III, CIII) and cytochrome c oxidase (complex IV, CIV), that cooperate to transfer electrons derived from NADH and succinate to molecular oxygen, creating an electrochemical gradient over the inner membrane that drives transmembrane transport and the ATP synthase. The cytochrome b-c1 complex catalyzes electron transfer from ubiquinol to cytochrome c, linking this redox reaction to translocation of protons across the mitochondrial inner membrane, with protons being carried across the membrane as hydrogens on the quinol. In the process called Q cycle, 2 protons are consumed from the matrix, 4 protons are released into the intermembrane space and 2 electrons are passed to cytochrome c. The chain is Cytochrome b-c1 complex subunit 9 (UQCR10) from Homo sapiens (Human).